The primary structure comprises 181 residues: NADH-quinone oxidoreductase subunit B (181 aa).

Residues Cys45, Cys46, Cys111, and Cys140 each coordinate [4Fe-4S] cluster.

This sequence belongs to the complex I 20 kDa subunit family. NDH-1 is composed of 14 different subunits. Subunits NuoB, C, D, E, F, and G constitute the peripheral sector of the complex. [4Fe-4S] cluster is required as a cofactor.

The protein localises to the cell inner membrane. The enzyme catalyses a quinone + NADH + 5 H(+)(in) = a quinol + NAD(+) + 4 H(+)(out). NDH-1 shuttles electrons from NADH, via FMN and iron-sulfur (Fe-S) centers, to quinones in the respiratory chain. The immediate electron acceptor for the enzyme in this species is believed to be ubiquinone. Couples the redox reaction to proton translocation (for every two electrons transferred, four hydrogen ions are translocated across the cytoplasmic membrane), and thus conserves the redox energy in a proton gradient. This chain is NADH-quinone oxidoreductase subunit B (nuoB), found in Thermus thermophilus (strain ATCC BAA-163 / DSM 7039 / HB27).